The following is an 886-amino-acid chain: Translation initiation factor IF-2 (886 aa).

2 disordered regions span residues 46–91 (LDHL…VEVR) and 121–297 (EQQK…HGFT). The span at 72–82 (STLSVTGSTGK) shows a compositional bias: polar residues. Composition is skewed to basic and acidic residues over residues 130 to 163 (AELK…AERK), 175 to 239 (AKSE…DHHL), and 246 to 260 (REAE…EQGT). One can recognise a tr-type G domain in the interval 386–555 (PRAPVVTVMG…LNQSELLELT (170 aa)). The G1 stretch occupies residues 395–402 (GHVDHGKT). 395–402 (GHVDHGKT) lines the GTP pocket. The tract at residues 420–424 (GITQH) is G2. Residues 441-444 (DTPG) form a G3 region. Residues 441-445 (DTPGH) and 495-498 (NKMD) each bind GTP. The G4 stretch occupies residues 495–498 (NKMD). The segment at 531–533 (SAK) is G5.

This sequence belongs to the TRAFAC class translation factor GTPase superfamily. Classic translation factor GTPase family. IF-2 subfamily.

The protein resides in the cytoplasm. Its function is as follows. One of the essential components for the initiation of protein synthesis. Protects formylmethionyl-tRNA from spontaneous hydrolysis and promotes its binding to the 30S ribosomal subunits. Also involved in the hydrolysis of GTP during the formation of the 70S ribosomal complex. The polypeptide is Translation initiation factor IF-2 (Pseudoalteromonas translucida (strain TAC 125)).